The following is a 167-amino-acid chain: Ribosome maturation factor RimM (167 aa).

Residues 94–165 (ENEYYYSDII…TIRITPMEGL (72 aa)) form the PRC barrel domain.

This sequence belongs to the RimM family. In terms of assembly, binds ribosomal protein uS19.

It localises to the cytoplasm. In terms of biological role, an accessory protein needed during the final step in the assembly of 30S ribosomal subunit, possibly for assembly of the head region. Essential for efficient processing of 16S rRNA. May be needed both before and after RbfA during the maturation of 16S rRNA. It has affinity for free ribosomal 30S subunits but not for 70S ribosomes. The chain is Ribosome maturation factor RimM from Staphylococcus haemolyticus (strain JCSC1435).